Consider the following 520-residue polypeptide: Nuclear GTP-binding protein NUG1 (520 aa).

Basic residues-rich tracts occupy residues 1–13 (MRVRKRQSRRTST) and 21–34 (KKASAHRKKEKKMA). The tract at residues 1–53 (MRVRKRQSRRTSTKLKEGIKKKASAHRKKEKKMAKKDVTWRSRSKKDPGIPSN) is disordered. The segment covering 35–48 (KKDVTWRSRSKKDP) has biased composition (basic and acidic residues). A CP-type G domain is found at 165–343 (YDKIFKSVID…ILDSPGICFP (179 aa)). Residues 213-216 (NKVD), 287-294 (GYPNVGKS), and 336-339 (DSPG) contribute to the GTP site. Serine 337 bears the Phosphoserine mark.

This sequence belongs to the TRAFAC class YlqF/YawG GTPase family.

The protein localises to the nucleus. Its function is as follows. GTPase required for 60S ribosomal subunit export to the cytoplasm. The protein is Nuclear GTP-binding protein NUG1 (NUG1) of Saccharomyces cerevisiae (strain ATCC 204508 / S288c) (Baker's yeast).